We begin with the raw amino-acid sequence, 27 residues long: iraD leader peptide (27 aa).

Functionally, a short protein whose stop codon overlaps with the start codon of downstream iraD; its mRNA secondary structure is predicted to fold and sequester the Shine-Dalgarno sequence of iraD. When this protein is expressed the downstream iraD is also expressed due to ribosomal coupling. The chain is iraD leader peptide (idlP) from Escherichia coli (strain K12).